Here is a 530-residue protein sequence, read N- to C-terminus: Bifunctional purine biosynthesis protein PurH (530 aa).

The 148-residue stretch at 1-148 folds into the MGS-like domain; sequence MNNARPIRRA…KNHKDVTIVV (148 aa).

This sequence belongs to the PurH family.

It carries out the reaction (6R)-10-formyltetrahydrofolate + 5-amino-1-(5-phospho-beta-D-ribosyl)imidazole-4-carboxamide = 5-formamido-1-(5-phospho-D-ribosyl)imidazole-4-carboxamide + (6S)-5,6,7,8-tetrahydrofolate. The enzyme catalyses IMP + H2O = 5-formamido-1-(5-phospho-D-ribosyl)imidazole-4-carboxamide. It functions in the pathway purine metabolism; IMP biosynthesis via de novo pathway; 5-formamido-1-(5-phospho-D-ribosyl)imidazole-4-carboxamide from 5-amino-1-(5-phospho-D-ribosyl)imidazole-4-carboxamide (10-formyl THF route): step 1/1. It participates in purine metabolism; IMP biosynthesis via de novo pathway; IMP from 5-formamido-1-(5-phospho-D-ribosyl)imidazole-4-carboxamide: step 1/1. In Aliivibrio fischeri (strain MJ11) (Vibrio fischeri), this protein is Bifunctional purine biosynthesis protein PurH.